The chain runs to 202 residues: Imidazoleglycerol-phosphate dehydratase (202 aa).

It belongs to the imidazoleglycerol-phosphate dehydratase family.

The protein localises to the cytoplasm. It carries out the reaction D-erythro-1-(imidazol-4-yl)glycerol 3-phosphate = 3-(imidazol-4-yl)-2-oxopropyl phosphate + H2O. The protein operates within amino-acid biosynthesis; L-histidine biosynthesis; L-histidine from 5-phospho-alpha-D-ribose 1-diphosphate: step 6/9. This Corynebacterium efficiens (strain DSM 44549 / YS-314 / AJ 12310 / JCM 11189 / NBRC 100395) protein is Imidazoleglycerol-phosphate dehydratase.